The following is a 254-amino-acid chain: 3-oxo-5-alpha-steroid 4-dehydrogenase 2 (254 aa).

4 consecutive transmembrane segments (helical) span residues 8–28, 72–92, 146–166, and 206–226; these read SPVL…LYFA, PRSL…AHYF, FSLG…SDYI, and LATW…FLGL.

This sequence belongs to the steroid 5-alpha reductase family.

Its subcellular location is the microsome membrane. It is found in the endoplasmic reticulum membrane. The enzyme catalyses a 3-oxo-5alpha-steroid + NADP(+) = a 3-oxo-Delta(4)-steroid + NADPH + H(+). It catalyses the reaction 17beta-hydroxy-5alpha-androstan-3-one + NADP(+) = testosterone + NADPH + H(+). The catalysed reaction is 5alpha-pregnane-3,20-dione + NADP(+) = progesterone + NADPH + H(+). In terms of biological role, converts testosterone (T) into 5-alpha-dihydrotestosterone (DHT) and progesterone or corticosterone into their corresponding 5-alpha-3-oxosteroids. It plays a central role in sexual differentiation and androgen physiology. This chain is 3-oxo-5-alpha-steroid 4-dehydrogenase 2 (SRD5A2), found in Sus scrofa (Pig).